A 545-amino-acid polypeptide reads, in one-letter code: Chaperonin GroEL (545 aa).

ATP contacts are provided by residues 29–32 (TLGP), lysine 50, 86–90 (DGTTT), glycine 415, and aspartate 495.

Belongs to the chaperonin (HSP60) family. As to quaternary structure, forms a cylinder of 14 subunits composed of two heptameric rings stacked back-to-back. Interacts with the co-chaperonin GroES.

The protein resides in the cytoplasm. It catalyses the reaction ATP + H2O + a folded polypeptide = ADP + phosphate + an unfolded polypeptide.. Together with its co-chaperonin GroES, plays an essential role in assisting protein folding. The GroEL-GroES system forms a nano-cage that allows encapsulation of the non-native substrate proteins and provides a physical environment optimized to promote and accelerate protein folding. The sequence is that of Chaperonin GroEL from Porphyromonas gingivalis (strain ATCC BAA-308 / W83).